The chain runs to 388 residues: Succinate--CoA ligase [ADP-forming] subunit beta (388 aa).

Residues 9 to 244 enclose the ATP-grasp domain; the sequence is KQLFARYGLP…QSQEDPREAQ (236 aa). Residues lysine 46, 53 to 55, glutamate 99, threonine 102, and glutamate 107 each bind ATP; that span reads GRG. Mg(2+) contacts are provided by asparagine 199 and aspartate 213. Substrate contacts are provided by residues asparagine 264 and 321-323; that span reads GIV.

The protein belongs to the succinate/malate CoA ligase beta subunit family. In terms of assembly, heterotetramer of two alpha and two beta subunits. Mg(2+) is required as a cofactor.

The enzyme catalyses succinate + ATP + CoA = succinyl-CoA + ADP + phosphate. It carries out the reaction GTP + succinate + CoA = succinyl-CoA + GDP + phosphate. Its pathway is carbohydrate metabolism; tricarboxylic acid cycle; succinate from succinyl-CoA (ligase route): step 1/1. Its function is as follows. Succinyl-CoA synthetase functions in the citric acid cycle (TCA), coupling the hydrolysis of succinyl-CoA to the synthesis of either ATP or GTP and thus represents the only step of substrate-level phosphorylation in the TCA. The beta subunit provides nucleotide specificity of the enzyme and binds the substrate succinate, while the binding sites for coenzyme A and phosphate are found in the alpha subunit. The chain is Succinate--CoA ligase [ADP-forming] subunit beta from Enterobacter sp. (strain 638).